A 239-amino-acid chain; its full sequence is 2-C-methyl-D-erythritol 4-phosphate cytidylyltransferase (239 aa).

It belongs to the IspD/TarI cytidylyltransferase family. IspD subfamily.

The catalysed reaction is 2-C-methyl-D-erythritol 4-phosphate + CTP + H(+) = 4-CDP-2-C-methyl-D-erythritol + diphosphate. It participates in isoprenoid biosynthesis; isopentenyl diphosphate biosynthesis via DXP pathway; isopentenyl diphosphate from 1-deoxy-D-xylulose 5-phosphate: step 2/6. Functionally, catalyzes the formation of 4-diphosphocytidyl-2-C-methyl-D-erythritol from CTP and 2-C-methyl-D-erythritol 4-phosphate (MEP). This is 2-C-methyl-D-erythritol 4-phosphate cytidylyltransferase from Acinetobacter baylyi (strain ATCC 33305 / BD413 / ADP1).